We begin with the raw amino-acid sequence, 65 residues long: Non-structural protein 5a (65 aa).

The polypeptide is Non-structural protein 5a (Avian infectious bronchitis virus (strain Beaudette) (IBV)).